Consider the following 166-residue polypeptide: 6,7-dimethyl-8-ribityllumazine synthase (166 aa).

Residues phenylalanine 24, alanine 58–glutamate 60, and alanine 82–isoleucine 84 each bind 5-amino-6-(D-ribitylamino)uracil. Glutamate 87–threonine 88 provides a ligand contact to (2S)-2-hydroxy-3-oxobutyl phosphate. The active-site Proton donor is histidine 90. Asparagine 115 provides a ligand contact to 5-amino-6-(D-ribitylamino)uracil. Residue arginine 129 coordinates (2S)-2-hydroxy-3-oxobutyl phosphate.

It belongs to the DMRL synthase family.

The catalysed reaction is (2S)-2-hydroxy-3-oxobutyl phosphate + 5-amino-6-(D-ribitylamino)uracil = 6,7-dimethyl-8-(1-D-ribityl)lumazine + phosphate + 2 H2O + H(+). Its pathway is cofactor biosynthesis; riboflavin biosynthesis; riboflavin from 2-hydroxy-3-oxobutyl phosphate and 5-amino-6-(D-ribitylamino)uracil: step 1/2. Its function is as follows. Catalyzes the formation of 6,7-dimethyl-8-ribityllumazine by condensation of 5-amino-6-(D-ribitylamino)uracil with 3,4-dihydroxy-2-butanone 4-phosphate. This is the penultimate step in the biosynthesis of riboflavin. The sequence is that of 6,7-dimethyl-8-ribityllumazine synthase from Ralstonia pickettii (strain 12J).